We begin with the raw amino-acid sequence, 929 residues long: Isoleucine--tRNA ligase (929 aa).

The 'HIGH' region signature appears at 58–68; sequence PYANGDIHIGH. Glu-563 contributes to the L-isoleucyl-5'-AMP binding site. The 'KMSKS' region signature appears at 605-609; sequence KMSKS. Position 608 (Lys-608) interacts with ATP. Zn(2+) is bound by residues Cys-892, Cys-895, Cys-912, and Cys-915.

This sequence belongs to the class-I aminoacyl-tRNA synthetase family. IleS type 1 subfamily. Monomer. Requires Zn(2+) as cofactor.

It localises to the cytoplasm. It carries out the reaction tRNA(Ile) + L-isoleucine + ATP = L-isoleucyl-tRNA(Ile) + AMP + diphosphate. In terms of biological role, catalyzes the attachment of isoleucine to tRNA(Ile). As IleRS can inadvertently accommodate and process structurally similar amino acids such as valine, to avoid such errors it has two additional distinct tRNA(Ile)-dependent editing activities. One activity is designated as 'pretransfer' editing and involves the hydrolysis of activated Val-AMP. The other activity is designated 'posttransfer' editing and involves deacylation of mischarged Val-tRNA(Ile). The chain is Isoleucine--tRNA ligase from Neisseria gonorrhoeae (strain ATCC 700825 / FA 1090).